The primary structure comprises 239 residues: LexA repressor (239 aa).

A DNA-binding region (H-T-H motif) is located at residues F26–T46. Active-site for autocatalytic cleavage activity residues include S160 and K198.

Belongs to the peptidase S24 family. In terms of assembly, homodimer.

It catalyses the reaction Hydrolysis of Ala-|-Gly bond in repressor LexA.. In terms of biological role, represses a number of genes involved in the response to DNA damage (SOS response), including recA and lexA. In the presence of single-stranded DNA, RecA interacts with LexA causing an autocatalytic cleavage which disrupts the DNA-binding part of LexA, leading to derepression of the SOS regulon and eventually DNA repair. The protein is LexA repressor of Methylobacterium sp. (strain 4-46).